We begin with the raw amino-acid sequence, 454 residues long: tRNA(Ile)-lysidine synthase (454 aa).

31–36 (SGGADS) is a binding site for ATP.

The protein belongs to the tRNA(Ile)-lysidine synthase family.

It is found in the cytoplasm. The catalysed reaction is cytidine(34) in tRNA(Ile2) + L-lysine + ATP = lysidine(34) in tRNA(Ile2) + AMP + diphosphate + H(+). Its function is as follows. Ligates lysine onto the cytidine present at position 34 of the AUA codon-specific tRNA(Ile) that contains the anticodon CAU, in an ATP-dependent manner. Cytidine is converted to lysidine, thus changing the amino acid specificity of the tRNA from methionine to isoleucine. This Porphyromonas gingivalis (strain ATCC 33277 / DSM 20709 / CIP 103683 / JCM 12257 / NCTC 11834 / 2561) protein is tRNA(Ile)-lysidine synthase.